The chain runs to 561 residues: Putative transport protein YbjL (561 aa).

A run of 5 helical transmembrane segments spans residues 8 to 28 (LLNGNYILLLFVVLALGLCLG), 32 to 52 (LGSIQLGNSIGVLVVSLLLGQ), 66 to 86 (FMLFIFCVGVEAGPNFFSIFF), 94 to 114 (MLALVMVGSALLIALGLGKLF), and 158 to 178 (NLSLGYALTYLIGLVSLIVGA). 2 consecutive RCK C-terminal domains span residues 200–288 (RGLD…SFRN) and 292–373 (VFDR…RIGF). A run of 5 helical transmembrane segments spans residues 383-403 (LLAFCAFFIIGLMIGMITFQF), 406-426 (FSFGIGNAAGLLFAGIMLGFL), 447-467 (FGLMVFMAGVGLSAGSGISNG), 475-495 (MLIAGLVVSLAPVVICFLFGA), and 540-560 (AIANVLLTLAGTLIVIIWPGL).

This sequence belongs to the AAE transporter (TC 2.A.81) family. YbjL subfamily.

Its subcellular location is the cell membrane. The chain is Putative transport protein YbjL from Salmonella arizonae (strain ATCC BAA-731 / CDC346-86 / RSK2980).